The sequence spans 80 residues: U-poneritoxin(01)-Om3a (80 aa).

The signal sequence occupies residues 1–25 (MKPSGLALAFLVVFMMAIMYNSVQA). A propeptide spanning residues 26–39 (AAIADADAEAEAIA) is cleaved from the precursor.

Belongs to the formicidae venom precursor-01 superfamily. Post-translationally, truncated sequences of this peptide have also been found in the venom. It is possible they have been cleaved in the venom. Expressed by the venom gland.

The protein localises to the secreted. Its function is as follows. Cationic amphipathic alpha-helical peptide with antimicrobial activities against E.coli (MIC=3.1 uM), S.aureus (MIC=25 uM), and S.cerevisiae (MIC=50 uM). Also shows histamine-releasing activity (37.5% at 10 uM). Does not show hemolytic activity, even at 50 uM. This is U-poneritoxin(01)-Om3a from Odontomachus monticola (Trap-jaw ant).